The chain runs to 31 residues: L-amino-acid oxidase (31 aa).

It belongs to the flavin monoamine oxidase family. FIG1 subfamily. In terms of assembly, homodimer; non-covalently linked. FAD serves as cofactor. Post-translationally, N-glycosylated. In terms of tissue distribution, expressed by the venom gland.

It is found in the secreted. It carries out the reaction an L-alpha-amino acid + O2 + H2O = a 2-oxocarboxylate + H2O2 + NH4(+). It catalyses the reaction L-leucine + O2 + H2O = 4-methyl-2-oxopentanoate + H2O2 + NH4(+). The enzyme catalyses L-phenylalanine + O2 + H2O = 3-phenylpyruvate + H2O2 + NH4(+). The catalysed reaction is L-histidine + O2 + H2O = 3-(imidazol-5-yl)pyruvate + H2O2 + NH4(+). In terms of biological role, catalyzes an oxidative deamination of predominantly hydrophobic and aromatic L-amino acids, thus producing hydrogen peroxide that may contribute to the diverse toxic effects of this enzyme. Is moderately active on L-Leu, L-His, and L-Phe, and very weakly active on L-Thr, and L-Cys. Exhibits diverse biological activities, such as hemorrhage, hemolysis, edema, antibacterial and antiparasitic activities, as well as regulation of platelet aggregation. Its effect on platelets is controversial, since it either induces aggregation or inhibits agonist-induced aggregation. These different effects are probably due to different experimental conditions. Inhibits growth of B.subtilis strain ATCC 6633 (MIC=32 uM), E.faecalis strain ATCC 12953 (MIC=32 uM), S.aureus strain ATCC 29213 (MIC=32 uM), S.pyogenes strain ATCC 19615 (MIC=8 uM), E.coli strain ATCC 8739 (MIC=4 uM), K.pneumoniae strain ATCC 13885 (MIC=2 uM), P.mirabilis strain ATCC 25933 (MIC=2 uM), P.aeruginosa strain ATCC 15442 (MIC=8 uM) and S.typhimurium strain ATCC 14028 (MIC=8 uM). This chain is L-amino-acid oxidase, found in Bothrops mattogrossensis (Pitviper).